Consider the following 665-residue polypeptide: Ion-translocating oxidoreductase complex subunit C (665 aa).

4Fe-4S ferredoxin-type domains are found at residues 368-398 and 408-437; these read EYAE…QQLY and KSEE…IQYF. [4Fe-4S] cluster is bound by residues cysteine 378, cysteine 381, cysteine 384, cysteine 388, cysteine 417, cysteine 420, cysteine 423, and cysteine 427. Composition is skewed to basic and acidic residues over residues 465 to 477 and 485 to 513; these read QARM…ERKA and ARRE…KANE. Disordered regions lie at residues 465–568, 580–623, and 637–665; these read QARM…DAKK, AKKL…LDPK, and KKLA…QIVR. 2 stretches are compositionally biased toward polar residues: residues 554–564 and 585–600; these read VENQEQQTQPT and QTNS…QTAE. Over residues 602–615 the composition is skewed to basic and acidic residues; that stretch reads EVEKTKSAVEKTEE. A compositionally biased stretch (polar residues) spans 643 to 656; sequence NSTSEAISNSQTAE.

It belongs to the 4Fe4S bacterial-type ferredoxin family. RnfC subfamily. In terms of assembly, the complex is composed of six subunits: RnfA, RnfB, RnfC, RnfD, RnfE and RnfG. [4Fe-4S] cluster is required as a cofactor.

The protein localises to the cell inner membrane. Part of a membrane-bound complex that couples electron transfer with translocation of ions across the membrane. In Haemophilus influenzae (strain 86-028NP), this protein is Ion-translocating oxidoreductase complex subunit C.